Consider the following 365-residue polypeptide: Sulfate/thiosulfate import ATP-binding protein CysA (365 aa).

The ABC transporter domain occupies 3–237 (IEIARIKKSF…PATRFVLEFM (235 aa)). An ATP-binding site is contributed by 35–42 (GPSGSGKT).

It belongs to the ABC transporter superfamily. Sulfate/tungstate importer (TC 3.A.1.6) family. The complex is composed of two ATP-binding proteins (CysA), two transmembrane proteins (CysT and CysW) and a solute-binding protein (CysP).

It is found in the cell inner membrane. The enzyme catalyses sulfate(out) + ATP + H2O = sulfate(in) + ADP + phosphate + H(+). It catalyses the reaction thiosulfate(out) + ATP + H2O = thiosulfate(in) + ADP + phosphate + H(+). Functionally, part of the ABC transporter complex CysAWTP involved in sulfate/thiosulfate import. Responsible for energy coupling to the transport system. The chain is Sulfate/thiosulfate import ATP-binding protein CysA from Salmonella typhimurium (strain LT2 / SGSC1412 / ATCC 700720).